Here is a 776-residue protein sequence, read N- to C-terminus: Transcriptional regulator QRICH1 (776 aa).

M1 bears the N-acetylmethionine mark. The CARD domain occupies 6–48 (ENTISFEEYIRVKARSVPQHRMKEFLDSLASKGPEALQEFQQT). Disordered stretches follow at residues 139-164 (IQGQ…PSQL) and 218-240 (ALSP…GTAS). Position 345 is a phosphoserine (S345). Residues K353 and K358 each participate in a glycyl lysine isopeptide (Lys-Gly) (interchain with G-Cter in SUMO2) cross-link. Over residues 419-429 (QQQPQQQTPQE) the composition is skewed to low complexity. The segment at 419–441 (QQQPQQQTPQEQTPPPQQQQQQL) is disordered. S464 carries the phosphoserine modification.

The protein resides in the nucleus. It localises to the cytoplasm. The protein localises to the cell membrane. Functionally, transcriptional regulator that acts as a mediator of the integrated stress response (ISR) through transcriptional control of protein homeostasis under conditions of ER stress. Controls the outcome of the unfolded protein response (UPR) which is an ER-stress response pathway. ER stress induces QRICH1 translation by a ribosome translation re-initiation mechanism in response to EIF2S1/eIF-2-alpha phosphorylation, and stress-induced QRICH1 regulates a transcriptional program associated with protein translation, protein secretion-mediated proteotoxicity and cell death during the terminal UPR. May cooperate with ATF4 transcription factor signaling to regulate ER homeostasis which is critical for cell viability. Up-regulates CASP3/caspase-3 activity in epithelial cells under ER stress. Central regulator of proteotoxicity associated with ER stress-mediated inflammatory diseases in the intestines and liver. Involved in chondrocyte hypertrophy, a process required for normal longitudinal bone growth. The protein is Transcriptional regulator QRICH1 of Homo sapiens (Human).